The following is a 133-amino-acid chain: Small ribosomal subunit protein uS8 (133 aa).

The protein belongs to the universal ribosomal protein uS8 family. As to quaternary structure, part of the 30S ribosomal subunit.

Functionally, one of the primary rRNA binding proteins, it binds directly to 16S rRNA central domain where it helps coordinate assembly of the platform of the 30S subunit. The polypeptide is Small ribosomal subunit protein uS8 (Sulfolobus acidocaldarius (strain ATCC 33909 / DSM 639 / JCM 8929 / NBRC 15157 / NCIMB 11770)).